The sequence spans 91 residues: Probable Fe(2+)-trafficking protein (91 aa).

The protein belongs to the Fe(2+)-trafficking protein family.

In terms of biological role, could be a mediator in iron transactions between iron acquisition and iron-requiring processes, such as synthesis and/or repair of Fe-S clusters in biosynthetic enzymes. This Ralstonia nicotianae (strain ATCC BAA-1114 / GMI1000) (Ralstonia solanacearum) protein is Probable Fe(2+)-trafficking protein.